We begin with the raw amino-acid sequence, 279 residues long: UPF0173 metal-dependent hydrolase MXAN_1394 (279 aa).

This sequence belongs to the UPF0173 family.

This chain is UPF0173 metal-dependent hydrolase MXAN_1394, found in Myxococcus xanthus (strain DK1622).